A 160-amino-acid polypeptide reads, in one-letter code: Large ribosomal subunit protein uL13 (160 aa).

Belongs to the universal ribosomal protein uL13 family. Part of the 50S ribosomal subunit.

In terms of biological role, this protein is one of the early assembly proteins of the 50S ribosomal subunit, although it is not seen to bind rRNA by itself. It is important during the early stages of 50S assembly. This is Large ribosomal subunit protein uL13 from Orientia tsutsugamushi (strain Boryong) (Rickettsia tsutsugamushi).